The chain runs to 118 residues: MRESIQRRKNRLRIKRKRRVRGKITGSADRPRVSIFKSNRHFYAQAIDDTKGHTLAYSDGAKLGVKVNKEDVKKVAEDLAGKLKALNIETIVFDRNGYLYHGVVASFADALRENGIKF.

This sequence belongs to the universal ribosomal protein uL18 family. As to quaternary structure, part of the 50S ribosomal subunit; part of the 5S rRNA/L5/L18/L25 subcomplex. Contacts the 5S and 23S rRNAs.

In terms of biological role, this is one of the proteins that bind and probably mediate the attachment of the 5S RNA into the large ribosomal subunit, where it forms part of the central protuberance. This Nitratiruptor sp. (strain SB155-2) protein is Large ribosomal subunit protein uL18.